Consider the following 171-residue polypeptide: 3-hydroxydecanoyl-[acyl-carrier-protein] dehydratase (171 aa).

Histidine 70 is a catalytic residue.

Belongs to the thioester dehydratase family. FabA subfamily. In terms of assembly, homodimer.

The protein resides in the cytoplasm. The catalysed reaction is a (3R)-hydroxyacyl-[ACP] = a (2E)-enoyl-[ACP] + H2O. The enzyme catalyses (3R)-hydroxydecanoyl-[ACP] = (2E)-decenoyl-[ACP] + H2O. It catalyses the reaction (2E)-decenoyl-[ACP] = (3Z)-decenoyl-[ACP]. It participates in lipid metabolism; fatty acid biosynthesis. In terms of biological role, necessary for the introduction of cis unsaturation into fatty acids. Catalyzes the dehydration of (3R)-3-hydroxydecanoyl-ACP to E-(2)-decenoyl-ACP and then its isomerization to Z-(3)-decenoyl-ACP. Can catalyze the dehydratase reaction for beta-hydroxyacyl-ACPs with saturated chain lengths up to 16:0, being most active on intermediate chain length. This chain is 3-hydroxydecanoyl-[acyl-carrier-protein] dehydratase, found in Azotobacter vinelandii (strain DJ / ATCC BAA-1303).